Here is a 594-residue protein sequence, read N- to C-terminus: MHEHLKEKLAILPDQPGCYLMKDKQGTVIYVGKAKVLKNRVRSYFTGSHDGKTLRLVGEIVDFEYIVTSSNLEALILELNLIKKHDPKYNIQLKDDKTYPFIKITAEKQPRLLITRNVKKDKGKYFGPYPNAQSAHETKKLLDRMYPLRKCSNMPDKVCLYYHMGQCLAPCVKEVTEEQNKEIVDEIIKFLNGGHKEVRSELETKMYEASEKLEFERAKELRDQIAHIDAIMEKQKMIMSDLVDRDVFGYAVDKGWMCVQVFFVRKGKLIERDVSMFPIYDEPEEGFLTFIGQFYENSSHFKPKEIVVPGSIDSELVERFLEVEATQPKRGKKKDLVELANKNAKIALEEKFYLIERDEERTIKAVENLGKQLGIETPYRIEAFDNSNIQGTNPVSAMIAFIDGKPAKKEYRKYKIKTVQGPDDYESMREVVRRRYTRALKEGLPLPDLIIIDGGKGHLAAASDVLENELGLYIPMAGLVKDDKHKTSHLIIGDPPEPVMLERNSQEFYLLQRVQDEVHRFAITFHRQLHGKSVIQSALDDIPGIGDKRKKVLLKHFGSLKKMKEASIEEFVEAGMPKNVAETIYTYLTDKKTL.

Positions 14-91 (DQPGCYLMKD…IKKHDPKYNI (78 aa)) constitute a GIY-YIG domain. The region spanning 196-231 (KEVRSELETKMYEASEKLEFERAKELRDQIAHIDAI) is the UVR domain.

Belongs to the UvrC family. Interacts with UvrB in an incision complex.

The protein localises to the cytoplasm. Its function is as follows. The UvrABC repair system catalyzes the recognition and processing of DNA lesions. UvrC both incises the 5' and 3' sides of the lesion. The N-terminal half is responsible for the 3' incision and the C-terminal half is responsible for the 5' incision. This chain is UvrABC system protein C, found in Bacillus thuringiensis (strain Al Hakam).